Reading from the N-terminus, the 155-residue chain is DNA polymerase epsilon subunit 4 (155 aa).

Composition is skewed to acidic residues over residues 1-16 (MASEELFEAEFSEEQD) and 24-48 (ETEEAELAETEEPLEITEESPDNPE). Positions 1–76 (MASEELFEAE…APADNEAKMT (76 aa)) are disordered. The span at 49–65 (AESTTEQLTEKPVTNGN) shows a compositional bias: polar residues.

As to quaternary structure, component of the DNA polymerase epsilon complex consisting of four subunits: the catalytic subunit PolE1/DNApol-epsilon255 and the accessory subunits PolE2/DNApol-epsilon58, Chrac-14/DNApolE3 and PolE4/Mes4.

It localises to the nucleus. In terms of biological role, accessory component of the DNA polymerase epsilon complex. Participates in DNA repair and in chromosomal DNA replication. Has a role in cell cycle progression. Required for wing morphogenesis. The chain is DNA polymerase epsilon subunit 4 from Drosophila melanogaster (Fruit fly).